The sequence spans 1520 residues: DNA topoisomerase 2 top-2 (1520 aa).

Positions 1–10 (MSDSDSEFSI) are enriched in acidic residues. Residues 1 to 40 (MSDSDSEFSIEDSPKKKTAPKKEKASPKKKKDDANESMVM) form a disordered region. The span at 12–34 (DSPKKKTAPKKEKASPKKKKDDA) shows a compositional bias: basic and acidic residues. ATP contacts are provided by residues Asn-126, Asn-155, 183–185 (SSN), 196–203 (GRNGYGAK), and 411–413 (QTK). Residues 490 to 607 (CTLILTEGDS…SLIQRNFVEE (118 aa)) form the Toprim domain. Mg(2+) contacts are provided by Glu-496, Asp-576, and Asp-578. Residues 750–1219 (IPCLVDGFKP…TWQDLWHEDL (470 aa)) form the Topo IIA-type catalytic domain. The active-site O-(5'-phospho-DNA)-tyrosine intermediate is Tyr-840. A disordered region spans residues 1249 to 1520 (AADAKTGRGP…RGRVVDSDSD (272 aa)). Residues 1283 to 1320 (TKAKYEKMSQPKKERVKKEPKEPKEPKKVKKEGQDIKK) show a composition bias toward basic and acidic residues. The span at 1342 to 1364 (MSEESDVEFDEGIDFDSDDDGVE) shows a compositional bias: acidic residues.

Belongs to the type II topoisomerase family. As to quaternary structure, homodimer. Interacts with nmad-1; the interaction is required for localization of top-2 to DNA. Interacts with gcna-1; this interaction allows the resolution of topoisomerase 2 DNA-protein cross-links. Mg(2+) is required as a cofactor. Requires Mn(2+) as cofactor. The cofactor is Ca(2+). Expressed in the hermaphrodite and male germline.

The protein resides in the nucleus. It localises to the nucleoplasm. The protein localises to the chromosome. Its subcellular location is the cytoplasm. It is found in the cytoskeleton. The protein resides in the spindle. The enzyme catalyses ATP-dependent breakage, passage and rejoining of double-stranded DNA.. Its function is as follows. Control of topological states of DNA by transient breakage and subsequent rejoining of DNA strands. Topoisomerase II makes double-strand breaks. Essential during mitosis in the adult germline and during embryogenesis for proper segregation of daughter chromosomes. Required for centromere resolution during mitosis. Required for chromosome segregation in anaphase of meiosis I during spermatogenesis. Promotes cleavage furrow stability during cytokinesis upon the presence of chromatin obstructions. Promotes DNA break formation upon zygotic genome activation in the Z2 and Z3 primordial germ cells in L1 larvae, thereby activating a checkpoint response. Essential for embryogenesis. This chain is DNA topoisomerase 2 top-2, found in Caenorhabditis elegans.